The sequence spans 177 residues: Large ribosomal subunit protein uL6 (177 aa).

Belongs to the universal ribosomal protein uL6 family. As to quaternary structure, part of the 50S ribosomal subunit.

This protein binds to the 23S rRNA, and is important in its secondary structure. It is located near the subunit interface in the base of the L7/L12 stalk, and near the tRNA binding site of the peptidyltransferase center. The sequence is that of Large ribosomal subunit protein uL6 from Brucella abortus (strain S19).